We begin with the raw amino-acid sequence, 364 residues long: Phosphoserine aminotransferase (364 aa).

Position 42 (Arg42) interacts with L-glutamate. Residues 76 to 77 (GR), Trp102, Thr156, Asp175, and Gln198 contribute to the pyridoxal 5'-phosphate site. Lys199 carries the N6-(pyridoxal phosphate)lysine modification. Residue 240–241 (NT) coordinates pyridoxal 5'-phosphate.

Belongs to the class-V pyridoxal-phosphate-dependent aminotransferase family. SerC subfamily. Homodimer. Requires pyridoxal 5'-phosphate as cofactor.

It localises to the cytoplasm. The enzyme catalyses O-phospho-L-serine + 2-oxoglutarate = 3-phosphooxypyruvate + L-glutamate. It carries out the reaction 4-(phosphooxy)-L-threonine + 2-oxoglutarate = (R)-3-hydroxy-2-oxo-4-phosphooxybutanoate + L-glutamate. The protein operates within amino-acid biosynthesis; L-serine biosynthesis; L-serine from 3-phospho-D-glycerate: step 2/3. It functions in the pathway cofactor biosynthesis; pyridoxine 5'-phosphate biosynthesis; pyridoxine 5'-phosphate from D-erythrose 4-phosphate: step 3/5. In terms of biological role, catalyzes the reversible conversion of 3-phosphohydroxypyruvate to phosphoserine and of 3-hydroxy-2-oxo-4-phosphonooxybutanoate to phosphohydroxythreonine. The chain is Phosphoserine aminotransferase from Shewanella sediminis (strain HAW-EB3).